The chain runs to 229 residues: GTP cyclohydrolase 1 (229 aa).

3 residues coordinate Zn(2+): cysteine 116, histidine 119, and cysteine 187.

This sequence belongs to the GTP cyclohydrolase I family. Toroid-shaped homodecamer, composed of two pentamers of five dimers.

It catalyses the reaction GTP + H2O = 7,8-dihydroneopterin 3'-triphosphate + formate + H(+). Its pathway is cofactor biosynthesis; 7,8-dihydroneopterin triphosphate biosynthesis; 7,8-dihydroneopterin triphosphate from GTP: step 1/1. The protein is GTP cyclohydrolase 1 of Synechococcus sp. (strain JA-3-3Ab) (Cyanobacteria bacterium Yellowstone A-Prime).